The chain runs to 420 residues: Arginine biosynthesis bifunctional protein ArgJ (420 aa).

6 residues coordinate substrate: T167, K193, T204, E284, N415, and T420. The Nucleophile role is filled by T204.

The protein belongs to the ArgJ family. In terms of assembly, heterotetramer of two alpha and two beta chains.

It is found in the cytoplasm. The catalysed reaction is N(2)-acetyl-L-ornithine + L-glutamate = N-acetyl-L-glutamate + L-ornithine. It catalyses the reaction L-glutamate + acetyl-CoA = N-acetyl-L-glutamate + CoA + H(+). It functions in the pathway amino-acid biosynthesis; L-arginine biosynthesis; L-ornithine and N-acetyl-L-glutamate from L-glutamate and N(2)-acetyl-L-ornithine (cyclic): step 1/1. The protein operates within amino-acid biosynthesis; L-arginine biosynthesis; N(2)-acetyl-L-ornithine from L-glutamate: step 1/4. Catalyzes two activities which are involved in the cyclic version of arginine biosynthesis: the synthesis of N-acetylglutamate from glutamate and acetyl-CoA as the acetyl donor, and of ornithine by transacetylation between N(2)-acetylornithine and glutamate. This is Arginine biosynthesis bifunctional protein ArgJ from Prochlorococcus marinus (strain NATL2A).